Here is a 444-residue protein sequence, read N- to C-terminus: 23S rRNA (uracil(1939)-C(5))-methyltransferase RlmD (444 aa).

One can recognise a TRAM domain in the interval 5 to 67 (RNRFDRTPFQ…RHFDEAKTVE (63 aa)). Positions 80, 86, 89, and 168 each coordinate [4Fe-4S] cluster. 6 residues coordinate S-adenosyl-L-methionine: Gln-276, Phe-305, Asn-310, Glu-326, Asp-353, and Asp-374. Cys-400 functions as the Nucleophile in the catalytic mechanism.

Belongs to the class I-like SAM-binding methyltransferase superfamily. RNA M5U methyltransferase family. RlmD subfamily.

The enzyme catalyses uridine(1939) in 23S rRNA + S-adenosyl-L-methionine = 5-methyluridine(1939) in 23S rRNA + S-adenosyl-L-homocysteine + H(+). In terms of biological role, catalyzes the formation of 5-methyl-uridine at position 1939 (m5U1939) in 23S rRNA. The polypeptide is 23S rRNA (uracil(1939)-C(5))-methyltransferase RlmD (Xanthomonas campestris pv. campestris (strain 8004)).